The chain runs to 211 residues: DNA-directed RNA polymerases I, II, and III subunit RPABC1 (211 aa).

The protein belongs to the archaeal Rpo5/eukaryotic RPB5 RNA polymerase subunit family. As to quaternary structure, component of the RNA polymerase I (Pol I), RNA polymerase II (Pol II) and RNA polymerase III (Pol III) complexes consisting of at least 13, 12 and 17 subunits, respectively. In RNA Pol II, this subunit is present in 2-fold molar excess over the other subunits.

It localises to the nucleus. DNA-dependent RNA polymerase catalyzes the transcription of DNA into RNA using the four ribonucleoside triphosphates as substrates. Common component of RNA polymerases I, II and III which synthesize ribosomal RNA precursors, mRNA precursors and many functional non-coding RNAs, and small RNAs, such as 5S rRNA and tRNAs, respectively. Pol II is the central component of the basal RNA polymerase II transcription machinery. Pols are composed of mobile elements that move relative to each other. In Pol II, RPB5 is part of the lower jaw surrounding the central large cleft and thought to grab the incoming DNA template. Seems to be the major component in this process. The polypeptide is DNA-directed RNA polymerases I, II, and III subunit RPABC1 (rpb-5) (Caenorhabditis elegans).